The following is a 60-amino-acid chain: Large ribosomal subunit protein uL30 (60 aa).

This sequence belongs to the universal ribosomal protein uL30 family. As to quaternary structure, part of the 50S ribosomal subunit.

The sequence is that of Large ribosomal subunit protein uL30 from Mycobacteroides abscessus (strain ATCC 19977 / DSM 44196 / CCUG 20993 / CIP 104536 / JCM 13569 / NCTC 13031 / TMC 1543 / L948) (Mycobacterium abscessus).